A 232-amino-acid polypeptide reads, in one-letter code: Cytidylate kinase (232 aa).

19–27 is a binding site for ATP; that stretch reads GPAGVGKTT.

This sequence belongs to the cytidylate kinase family. Type 1 subfamily.

It is found in the cytoplasm. The enzyme catalyses CMP + ATP = CDP + ADP. The catalysed reaction is dCMP + ATP = dCDP + ADP. This Nitratidesulfovibrio vulgaris (strain DP4) (Desulfovibrio vulgaris) protein is Cytidylate kinase.